The sequence spans 102 residues: Small ribosomal subunit protein uS10 (102 aa).

This sequence belongs to the universal ribosomal protein uS10 family. In terms of assembly, part of the 30S ribosomal subunit.

In terms of biological role, involved in the binding of tRNA to the ribosomes. The polypeptide is Small ribosomal subunit protein uS10 (Latilactobacillus sakei subsp. sakei (strain 23K) (Lactobacillus sakei subsp. sakei)).